The chain runs to 331 residues: Tungstate uptake system ATP-binding protein TupC (331 aa).

Residues 2-230 (IEISNLFFNY…NQGVKFCNFI (229 aa)) form the ABC transporter domain. ATP is bound at residue 34-41 (GANGSGKS).

Belongs to the ABC transporter superfamily. The complex is composed of two ATP-binding proteins (TupC), two transmembrane proteins (TupB) and a solute-binding protein (TupA).

The enzyme catalyses tungstate(in) + ATP + H2O = tungstate(out) + ADP + phosphate + H(+). Functionally, part of an ABC transporter complex involved in ultra-high affinity tungstate uptake. Probably responsible for energy coupling to the transport system. In Campylobacter jejuni subsp. jejuni serotype O:2 (strain ATCC 700819 / NCTC 11168), this protein is Tungstate uptake system ATP-binding protein TupC.